Consider the following 229-residue polypeptide: Putative N-acetylmannosamine-6-phosphate 2-epimerase (229 aa).

This sequence belongs to the NanE family.

The enzyme catalyses an N-acyl-D-glucosamine 6-phosphate = an N-acyl-D-mannosamine 6-phosphate. It functions in the pathway amino-sugar metabolism; N-acetylneuraminate degradation; D-fructose 6-phosphate from N-acetylneuraminate: step 3/5. In terms of biological role, converts N-acetylmannosamine-6-phosphate (ManNAc-6-P) to N-acetylglucosamine-6-phosphate (GlcNAc-6-P). This chain is Putative N-acetylmannosamine-6-phosphate 2-epimerase, found in Escherichia coli O157:H7.